The following is a 959-amino-acid chain: Isoleucine--tRNA ligase (959 aa).

The short motif at Pro-66 to His-76 is the 'HIGH' region element. Glu-592 is an L-isoleucyl-5'-AMP binding site. The 'KMSKS' region motif lies at Lys-633–Ser-637. Position 636 (Lys-636) interacts with ATP. Cys-922, Cys-925, Cys-942, and Cys-945 together coordinate Zn(2+).

This sequence belongs to the class-I aminoacyl-tRNA synthetase family. IleS type 1 subfamily. Monomer. Zn(2+) is required as a cofactor.

Its subcellular location is the cytoplasm. It carries out the reaction tRNA(Ile) + L-isoleucine + ATP = L-isoleucyl-tRNA(Ile) + AMP + diphosphate. Its function is as follows. Catalyzes the attachment of isoleucine to tRNA(Ile). As IleRS can inadvertently accommodate and process structurally similar amino acids such as valine, to avoid such errors it has two additional distinct tRNA(Ile)-dependent editing activities. One activity is designated as 'pretransfer' editing and involves the hydrolysis of activated Val-AMP. The other activity is designated 'posttransfer' editing and involves deacylation of mischarged Val-tRNA(Ile). This chain is Isoleucine--tRNA ligase, found in Cupriavidus metallidurans (strain ATCC 43123 / DSM 2839 / NBRC 102507 / CH34) (Ralstonia metallidurans).